The primary structure comprises 555 residues: CTP synthase (555 aa).

The tract at residues 1 to 265 (MTRYIFITGG…GNRVCEKLNI (265 aa)) is amidoligase domain. Ser13 lines the CTP pocket. Ser13 provides a ligand contact to UTP. ATP is bound by residues 14 to 19 (SLGKGI) and Asp71. 2 residues coordinate Mg(2+): Asp71 and Glu139. CTP is bound by residues 146–148 (DIE), 186–191 (KTKPTQ), and Lys222. UTP is bound by residues 186-191 (KTKPTQ) and Lys222. The Glutamine amidotransferase type-1 domain maps to 290–541 (TVAVVGKYVD…IKAGLAAKEA (252 aa)). Gly351 is a binding site for L-glutamine. The Nucleophile; for glutamine hydrolysis role is filled by Cys378. L-glutamine-binding positions include 379 to 382 (LGMQ), Glu402, and Arg469. Active-site residues include His514 and Glu516.

Belongs to the CTP synthase family. As to quaternary structure, homotetramer.

The enzyme catalyses UTP + L-glutamine + ATP + H2O = CTP + L-glutamate + ADP + phosphate + 2 H(+). It catalyses the reaction L-glutamine + H2O = L-glutamate + NH4(+). It carries out the reaction UTP + NH4(+) + ATP = CTP + ADP + phosphate + 2 H(+). It participates in pyrimidine metabolism; CTP biosynthesis via de novo pathway; CTP from UDP: step 2/2. With respect to regulation, allosterically activated by GTP, when glutamine is the substrate; GTP has no effect on the reaction when ammonia is the substrate. The allosteric effector GTP functions by stabilizing the protein conformation that binds the tetrahedral intermediate(s) formed during glutamine hydrolysis. Inhibited by the product CTP, via allosteric rather than competitive inhibition. Functionally, catalyzes the ATP-dependent amination of UTP to CTP with either L-glutamine or ammonia as the source of nitrogen. Regulates intracellular CTP levels through interactions with the four ribonucleotide triphosphates. This is CTP synthase from Coxiella burnetii (strain CbuK_Q154) (Coxiella burnetii (strain Q154)).